The chain runs to 368 residues: Endophilin-A2 (368 aa).

The interval 1 to 21 (MSVAGLKKQFYKASQLVSEKV) is membrane-binding amphipathic helix. The BAR domain occupies 18–249 (SEKVGGAEGT…LKRRVREASS (232 aa)). The tract at residues 60-87 (PNPASRAKLTMLNTVSKIRGQVKNPGYP) is required for dimerization upon membrane association. The stretch at 180-250 (DEELRQALEK…KRRVREASSR (71 aa)) forms a coiled coil. The tract at residues 218–254 (LVDAQLDYHRQAVQILEELADKLKRRVREASSRPKRE) is interaction with ARC. The disordered stretch occupies residues 244–307 (VREASSRPKR…MPSKSMPPLD (64 aa)). The segment covering 245–263 (REASSRPKREFKPRPREPF) has biased composition (basic and acidic residues). 2 positions are modified to phosphoserine: serine 288 and serine 292. Residues 306 to 365 (LDQPSCKALYDFEPENDGELGFREGDLITLTNQIDENWYEGMLHGQSGFFPLSYVQVLVP) form the SH3 domain. Phosphotyrosine is present on tyrosine 315.

This sequence belongs to the endophilin family. In terms of assembly, interacts with ARC, SYNJ1 and DNM1. Interacts with PDCD6IP. Interacts with BIN2.

Its subcellular location is the cytoplasm. The protein resides in the early endosome membrane. The protein localises to the cell projection. It localises to the podosome. Functionally, implicated in endocytosis. May recruit other proteins to membranes with high curvature. This Mus musculus (Mouse) protein is Endophilin-A2 (Sh3gl1).